The sequence spans 86 residues: U15-lycotoxin-Ls1a (86 aa).

The first 20 residues, 1–20, serve as a signal peptide directing secretion; that stretch reads MNSKIFAVLFLLAFLSCVLS. Residues 21 to 66 enclose the WAP domain; the sequence is DQYCPKSSITACKKMNIRNDCCKDDDCTGGSWCCATPCGNFCKYPT. Cystine bridges form between C24–C54, C32–C58, C41–C53, C42–C80, and C47–C62.

The protein belongs to the venom protein 11 family. 01 (wap-1) subfamily. In terms of processing, contains 5 disulfide bonds. Expressed by the venom gland.

Its subcellular location is the secreted. Its function is as follows. Has antibacterial activity. In Lycosa singoriensis (Wolf spider), this protein is U15-lycotoxin-Ls1a.